A 356-amino-acid polypeptide reads, in one-letter code: S-adenosylmethionine:tRNA ribosyltransferase-isomerase (356 aa).

The protein belongs to the QueA family. As to quaternary structure, monomer.

It localises to the cytoplasm. The catalysed reaction is 7-aminomethyl-7-carbaguanosine(34) in tRNA + S-adenosyl-L-methionine = epoxyqueuosine(34) in tRNA + adenine + L-methionine + 2 H(+). The protein operates within tRNA modification; tRNA-queuosine biosynthesis. Its function is as follows. Transfers and isomerizes the ribose moiety from AdoMet to the 7-aminomethyl group of 7-deazaguanine (preQ1-tRNA) to give epoxyqueuosine (oQ-tRNA). This is S-adenosylmethionine:tRNA ribosyltransferase-isomerase from Escherichia coli (strain UTI89 / UPEC).